Consider the following 257-residue polypeptide: Imidazole glycerol phosphate synthase subunit HisF (257 aa).

Active-site residues include aspartate 11 and aspartate 130.

Belongs to the HisA/HisF family. In terms of assembly, heterodimer of HisH and HisF.

The protein localises to the cytoplasm. The enzyme catalyses 5-[(5-phospho-1-deoxy-D-ribulos-1-ylimino)methylamino]-1-(5-phospho-beta-D-ribosyl)imidazole-4-carboxamide + L-glutamine = D-erythro-1-(imidazol-4-yl)glycerol 3-phosphate + 5-amino-1-(5-phospho-beta-D-ribosyl)imidazole-4-carboxamide + L-glutamate + H(+). It functions in the pathway amino-acid biosynthesis; L-histidine biosynthesis; L-histidine from 5-phospho-alpha-D-ribose 1-diphosphate: step 5/9. In terms of biological role, IGPS catalyzes the conversion of PRFAR and glutamine to IGP, AICAR and glutamate. The HisF subunit catalyzes the cyclization activity that produces IGP and AICAR from PRFAR using the ammonia provided by the HisH subunit. In Actinobacillus pleuropneumoniae serotype 7 (strain AP76), this protein is Imidazole glycerol phosphate synthase subunit HisF.